A 360-amino-acid chain; its full sequence is Nodulin-44 (360 aa).

Residues 1–23 (MEEKILMRVIVITVFLFIGAATA) form the signal peptide. 2 disordered regions span residues 123–148 (FSPRGRRSKLDNHQTDAGTLGKVIPL) and 228–249 (FSPRGRRSKLDNHQTDAGTLGR).

The protein belongs to the nodulin 20 family.

The sequence is that of Nodulin-44 from Glycine max (Soybean).